The sequence spans 208 residues: Dephospho-CoA kinase (208 aa).

Residues 3 to 208 (EIGLTGGIGS…ALSAAGVTQA (206 aa)) enclose the DPCK domain. 11 to 16 (GSGKTR) is a binding site for ATP.

The protein belongs to the CoaE family.

The protein resides in the cytoplasm. The enzyme catalyses 3'-dephospho-CoA + ATP = ADP + CoA + H(+). Its pathway is cofactor biosynthesis; coenzyme A biosynthesis; CoA from (R)-pantothenate: step 5/5. In terms of biological role, catalyzes the phosphorylation of the 3'-hydroxyl group of dephosphocoenzyme A to form coenzyme A. The chain is Dephospho-CoA kinase from Cupriavidus pinatubonensis (strain JMP 134 / LMG 1197) (Cupriavidus necator (strain JMP 134)).